Reading from the N-terminus, the 188-residue chain is Pro-adrenomedullin (188 aa).

A signal peptide spans 1 to 21 (MKLVPVALLYLGSLAFLGADT). An Arginine amide modification is found at Arg41. A propeptide spanning residues 45-92 (ELRVSSSYPTGLAEVKAGPAQTLIRTQDVKGASRNPQTSGPDAARIRV) is cleaved from the precursor. Cysteines 110 and 115 form a disulfide. A disordered region spans residues 131-176 (DKDGVAPRSKISPQGYGRRRRRSLPEPGLRRTLLFPEPRPGGAPAP). Residue Tyr146 is modified to Tyrosine amide. The propeptide at 153 to 188 (SLPEPGLRRTLLFPEPRPGGAPAPRAHQVLANLLKM) is preproAM C-terminal fragment.

It belongs to the adrenomedullin family.

It localises to the secreted. In terms of biological role, adrenomedullin/ADM and proadrenomedullin N-20 terminal peptide/PAMP are peptide hormones that act as potent hypotensive and vasodilatator agents. Numerous actions have been reported most related to the physiologic control of fluid and electrolyte homeostasis. Its function is as follows. ADM function is mediated by the CALCRL-RAMP2 and CALCRL-RAMP3 receptor complexes with ADM showing the highest potency for the CALCRL-RAMP2 complex. The protein is Pro-adrenomedullin (ADM) of Canis lupus familiaris (Dog).